A 295-amino-acid polypeptide reads, in one-letter code: Signal-transducing adaptor protein 1 (295 aa).

Residues 25–121 (PLYFEGFLLI…WRGFILTVTE (97 aa)) form the PH domain. The residue at position 168 (Tyr-168) is a Phosphotyrosine. Residues 177-280 (ACFYTVSRKE…TDENTGQEPS (104 aa)) enclose the SH2 domain. The segment at 270–295 (STDENTGQEPSMEGRSEKLKKNPHIA) is disordered.

In terms of assembly, interacts with KIT and CSF1R. Interacts with URI1; the interaction is phosphorylation-dependent and occurs in a growth-dependent manner. Phosphorylated on tyrosine by TEC. Phosphorylated on tyrosine by KIT.

It is found in the nucleus. The protein resides in the cytoplasm. Its subcellular location is the mitochondrion. In BCR signaling, appears to function as a docking protein acting downstream of TEC and participates in a positive feedback loop by increasing the activity of TEC. This chain is Signal-transducing adaptor protein 1 (STAP1), found in Homo sapiens (Human).